The following is a 382-amino-acid chain: Elloramycin glycosyltransferase ElmGT (382 aa).

It belongs to the glycosyltransferase 28 family.

It carries out the reaction 8-demethyltetracenomycin C + dTDP-beta-L-rhamnose = 8-demethyl-8-alpha-L-rhamnosyl-tetracenomycin C + dTDP + H(+). Its pathway is antibiotic biosynthesis. In terms of biological role, glycosyltransferase that transfers an L-rhamnose moiety from dTDP-L-rhamnose to the elloramycin aglycone 8-demethyl-tetracenomycin C (8DMTC) in elloramycin biosynthesis, an antitumor polyketide. Possesses donor substrate flexibility: able to transfer at least 11 different sugars to 8DMTC, such as NDP-D-glucose, as well as NDP-L-digitoxose, including both L- and D-isomeric forms of some sugars. The polypeptide is Elloramycin glycosyltransferase ElmGT (Streptomyces olivaceus).